Consider the following 300-residue polypeptide: Ribosomal protein L11 methyltransferase (300 aa).

Residues threonine 152, glycine 173, aspartate 195, and asparagine 234 each contribute to the S-adenosyl-L-methionine site.

This sequence belongs to the methyltransferase superfamily. PrmA family.

The protein localises to the cytoplasm. It catalyses the reaction L-lysyl-[protein] + 3 S-adenosyl-L-methionine = N(6),N(6),N(6)-trimethyl-L-lysyl-[protein] + 3 S-adenosyl-L-homocysteine + 3 H(+). Its function is as follows. Methylates ribosomal protein L11. The polypeptide is Ribosomal protein L11 methyltransferase (Paraburkholderia xenovorans (strain LB400)).